The chain runs to 402 residues: Protein lag-2 (402 aa).

A signal peptide spans 1–15 (MIAYFLLLLTCLPVL). The Extracellular segment spans residues 16-279 (QARVEVHQEF…TTTTPTTVEI (264 aa)). 2 N-linked (GlcNAc...) asparagine glycosylation sites follow: asparagine 72 and asparagine 105. The DSL domain occupies 122–166 (VTCARNYFGNRCENFCDAHLAKAARKRCDAMGRLRCDIGWMGPHC). Disulfide bonds link cysteine 124-cysteine 133, cysteine 137-cysteine 149, cysteine 157-cysteine 166, cysteine 175-cysteine 183, cysteine 177-cysteine 204, cysteine 206-cysteine 215, cysteine 233-cysteine 245, cysteine 239-cysteine 254, and cysteine 256-cysteine 265. 2 consecutive EGF-like domains span residues 171–216 (DPRK…TRCE) and 229–266 (RPDACSVKDACLNGAKCFPNGPKVFCSCAVGFIGEFCE). A glycan (N-linked (GlcNAc...) asparagine) is linked at asparagine 194. The chain crosses the membrane as a helical span at residues 280 to 306 (TVSTSGYSSAVYITVALFVIFSIIIGC). The Cytoplasmic segment spans residues 307-402 (FKYKFKPMRQ…PPSIPACHYV (96 aa)).

In terms of assembly, may interact with lin-12 / Notch receptor. In terms of tissue distribution, expressed in the gonad distal tip cell (DTC) of hermaphrodites.

Its subcellular location is the cell membrane. Functionally, probable ligand for lin-12/Notch and glp-1/Notch receptors and involved in the mediation of Notch signaling. Involved in the lin-12/Notch pathway signaling of cell fate in vulval precursor cells (VPCs) and in the postembryonic mesodermal lineage (M lineage), acting redundantly with dsl-1 and apx-1. Functions in uterine cells to promote basement membrane mobility during tissue remodeling. Required for oocyte growth control, acting redundantly with apx-1, perhaps signaling via the glp-1/Notch pathway. Plays a role in Notch-dependent induction of left-right asymmetry in interneurons and motoneurons. Involved in maintaining the developmentally arrested larval state known as dauer, probably signaling in the glp-1/Notch pathway. Required for normal sleep bout quantity and arousal thresholds during the transition from the last larval stage to adulthood in well-fed animals. The polypeptide is Protein lag-2 (Caenorhabditis elegans).